The sequence spans 204 residues: Proteasome subunit beta type-3 (204 aa).

It belongs to the peptidase T1B family. As to quaternary structure, the 26S proteasome consists of a 20S proteasome core and two 19S regulatory subunits. The 20S proteasome core is composed of 28 subunits that are arranged in four stacked rings, resulting in a barrel-shaped structure. The two end rings are each formed by seven alpha subunits, and the two central rings are each formed by seven beta subunits. The catalytic chamber with the active sites is on the inside of the barrel.

It is found in the cytoplasm. The protein localises to the nucleus. Its function is as follows. Non-catalytic component of the proteasome, a multicatalytic proteinase complex which is characterized by its ability to cleave peptides with Arg, Phe, Tyr, Leu, and Glu adjacent to the leaving group at neutral or slightly basic pH. The proteasome has an ATP-dependent proteolytic activity. The chain is Proteasome subunit beta type-3 (pbs-3) from Caenorhabditis elegans.